Here is a 329-residue protein sequence, read N- to C-terminus: Interleukin-12 subunit beta (329 aa).

The signal sequence occupies residues 1–22 (MCHQWLVLSWFSLVLLASPLMA). Positions 29 to 106 (DVYVVELDWY…LSHSHLLLHK (78 aa)) constitute an Ig-like C2-type domain. An intrachain disulfide couples Cys50 to Cys90. N-linked (GlcNAc...) asparagine glycans are attached at residues Asn125, Asn135, and Asn223. The 92-residue stretch at 238–329 (PPKNLQLKPL…WSEWASVSCS (92 aa)) folds into the Fibronectin type-III domain.

The protein belongs to the IL-12B family. Heterodimer with IL12A; disulfide-linked. The heterodimer is known as interleukin IL-12. Heterodimer with IL23A; disulfide-linked. The heterodimer is known as interleukin IL-23. Also secreted as a monomer. Interacts with NBR1; this interaction promotes IL-12 secretion.

It is found in the secreted. In terms of biological role, cytokine that can act as a growth factor for activated T and NK cells, enhance the lytic activity of NK/lymphokine-activated killer cells, and stimulate the production of IFN-gamma by resting PBMC. Associates with IL23A to form the IL-23 interleukin, a heterodimeric cytokine which functions in innate and adaptive immunity. IL-23 may constitute with IL-17 an acute response to infection in peripheral tissues. IL-23 binds to a heterodimeric receptor complex composed of IL12RB1 and IL23R, activates the Jak-Stat signaling cascade, stimulates memory rather than naive T-cells and promotes production of pro-inflammatory cytokines. IL-23 induces autoimmune inflammation and thus may be responsible for autoimmune inflammatory diseases and may be important for tumorigenesis. This Equus caballus (Horse) protein is Interleukin-12 subunit beta (IL12B).